The sequence spans 2476 residues: MGSLDDNTLQQVSVLFGPKYPEVELPAGHIRRYLSNQRNANWLHDAIRDLPSVWHDILRLWPAAEKLHGDARLRQLSAFLGGGTLRPDMAEPMNFLLVPATVLRHLVDFLELKEDKNYDVCDIQGFCVGFLAAIAAACWSDNEDEFGKVVSTVLRLAVYIGAAVDLDELCEQPARSIAVRWRTAQEHKLLTEVLTRYQGAYISCVTDENAVTVTVWDSQSVSFAKELEKHGLSVKTTTLRGRFHHSNHTQAVEDILQSCERNSRLCLPSKCHKRSLPRSNINGRVCEADSLFTVAVESILTTQANWKITVTATLDNMGQSDARSIIPIGAGQFVPRHARCRMLNIVEFNKGEHINGRRKMQSATALDVGVNVTAPETTAVPIAVTGMACRYPQADSVEELWRILDLGQCTVSPMPNSRLKSGSLQREPKGPFFGNYLARPDAFDHRFFGISAREAESMDPQQRVLLQVAYEAMESAGYCGLRRSKLPDDIGCYVGVGCDDYSENVGSRNATAFSATGTLQAFNSGRISHYFGWSGPSVTVDTACSSAAVAIHLACQAIRTNDCAIAVAGGVNIMTDPRWSQNLAGASFLSPTGASKAFDADANGYCRGEGAGLLVLRPLEAALRDGDPIHAVITGTSVNQGANCSPITVPDSNSQRSLYLKALSLSGLTPDVVGYVEAHGTGTQVGDPIEFESIRKTFSGPNRATKLYVGSIKDNIGHTETSSGVAGMLKTILMIQKRRIPKQANFRRLNPRITLNERNHIEIPTQSIDWEAEKRVAMVTNYGAAGSNAAIVLREPASTPATSNSAHRETLPSHVPFYVSARTEESLRSYCEALQSTIREVAQSGTNTVQHIAYNLARKQNRDMEHFVTFPAAAGEPSELMTRLGSIASAHTQVERRSQSFHPVIICFGGQTGDTASISRNLFESCELLRFHVDECENACNALDLPSLFPAIVSPFPNKDIVNLHCVLFSIQYATAKAWLDSGLQVTRMIGHSFGQLTALCVAGGLSLIDGMRLVATRAQLIQKHWGPHTGVMLSLRASKEKVQALLDAASGHADLACLNGPDNFVVAGDEESIRRIEIIATEKGMHVELKRLKNTHAFHSRLVDAILPGLSEVANTLTFRQLDIPVEACAEQEDDWLWVTGDKIVQHSRKPVFFHDAVERTLSRVDGPCVWLEAGTASPVINMVRRVVEASRPLKSHVYLPTDLSGAQAQANLAKVTCTLWSKAVPVQFWPFHPSETGYRWINLPPYQFAKTSHWIEYNPDAFRSPPQVPDQENVQEASLVRLLRQDGKEALFTINNKDNVFRMCTAGHAVANQNLCPASLYFELVVQAALLVSSTATKPTMYHIESLNICSPLVLGMPGAVLLQLTQQDESHGQWSFVLSTRDGLQDAVTHATGRVSLQAAGSNTGICARLSSLQRLLNLASWNSIATSPSSSGLKRSTVYQAFARAVNYADYYRGVEEVYAVGHEATGRVILPSSPTKCNPCDPILIDNFIQVAGIHVNCLSETHDDEVFVCSSVGDVLIGESFVRRDTAATVPWAVYSNYEPESKKKIVCDVFVLDHTTGALAVCMLSATFTGVSIQSLKRTLNRLSNHTARPTEAEQVSINVAAEATALSSTPVAHVSSSDGDLLAVQTMLGELLGISADELSAAAALGDIGVDSLMSTEVLTEINKRFGVAISNAELTQIPDVGGLVQRIFPGHSVVRIKTHSQGAVETEITITDREPKSISVDLAPVCDTSPTAFVDKASKLFATTRTSAEFSRKTRFAGFCDTVFPQQMELVTSYVVEAFHALGADLASLTPGQVVPPVKILPQHGKVMNQLVAVLEYSDLIERRESEIIRSQQPVGTVPSLILYKKILNKHAQHASEHKLLHTTGSRLAECLSGKADPLSLLFQNAEARALMTDVYSNAPMFKSATIQLAQYLKDLLFNLGTQREIKVLEIGAGTGGTTNYLVQELAAVPGLRFQYTFTDISSSLVTLARKRFKAYDFMRYTTLDIENDPSPELQGQYDIIISTNCIHATRNLITSCTNIRRLLRPEGILCLIELTRNLFWFDLVFGLLEGWWLFNDGRSHALAHERLWDHNLRQAGFNWVDWTDNDSAESDILRLIVASSTQPFYALEGDDECEADCNTVQEQTVLYNTRDGLELFADIYYPEKTDRSGAKRPIALLIHGGGHIMLSRKEIHHEQVRMLFDMGFLPVSIDYRLCPEVSLLDGPMQDACDALAWARNKLPQLQLQRRDILPDGNNVVAVGWSTGGHLAMTLAWTAPARGVSAPEAILSFYSPTDYTDPFWSKPNFPYRVDVSTSDIQTGNPLDALQDAPISGYNPPPSKRALGGWMAPSDPRSRIALYMNWTGQTLPVLFYGCNYRARAAESGQDYEVVLPEPILSEVQKVCPFSQISAGSYRAPTFLIHGTLDDLIPVQQAQRTHDKMQACGVDSDLRIVRDGLHLFDLEANFAGNQHAFQAVVDGYEFLRRHVGL.

Positions 14 to 253 (VLFGPKYPEV…HHSNHTQAVE (240 aa)) are N-terminal acylcarrier protein transacylase domain (SAT). The Ketosynthase family 3 (KS3) domain occupies 379–795 (AVPIAVTGMA…GSNAAIVLRE (417 aa)). Residues Cys544, His679, and His718 each act as for beta-ketoacyl synthase activity in the active site. The interval 906-1210 (ICFGGQTGDT…LPTDLSGAQA (305 aa)) is malonyl-CoA:ACP transacylase (MAT) domain. The active-site For acyl/malonyl transferase activity is Ser993. The N-terminal hotdog fold stretch occupies residues 1277–1405 (QEASLVRLLR…GRVSLQAAGS (129 aa)). The region spanning 1277 to 1584 (QEASLVRLLR…FTGVSIQSLK (308 aa)) is the PKS/mFAS DH domain. The segment at 1280–1583 (SLVRLLRQDG…TFTGVSIQSL (304 aa)) is product template (PT) domain. His1310 (proton acceptor; for dehydratase activity) is an active-site residue. A C-terminal hotdog fold region spans residues 1433 to 1584 (SSSGLKRSTV…FTGVSIQSLK (152 aa)). Residue Asp1491 is the Proton donor; for dehydratase activity of the active site. Positions 1626–1700 (DGDLLAVQTM…GLVQRIFPGH (75 aa)) constitute a Carrier domain. Ser1660 is subject to O-(pantetheine 4'-phosphoryl)serine. The interval 1862–2095 (QHASEHKLLH…GFNWVDWTDN (234 aa)) is methyltransferase (CMeT) domain. The thioesterase (TE) domain stretch occupies residues 2128–2476 (NTVQEQTVLY…YEFLRRHVGL (349 aa)). Catalysis depends on for thioesterase activity residues Ser2251, Asp2413, and His2445.

The catalysed reaction is 3 malonyl-CoA + acetyl-CoA + 2 S-adenosyl-L-methionine = 3,5-dimethylorsellinate + 2 S-adenosyl-L-homocysteine + 3 CO2 + 4 CoA. Its pathway is secondary metabolite biosynthesis; terpenoid biosynthesis. Non-reducing polyketide synthase; part of the gene cluster A that mediates the biosynthesis of austinol and dehydroaustinol, two fungal meroterpenoids. The first step of the pathway is the synthesis of 3,5-dimethylorsellinic acid by the polyketide synthase ausA. 3,5-dimethylorsellinic acid is then prenylated by the polyprenyl transferase ausN. Further epoxidation by the FAD-dependent monooxygenase ausM and cyclization by the probable terpene cyclase ausL lead to the formation of protoaustinoid A. Protoaustinoid A is then oxidized to spiro-lactone preaustinoid A3 by the combined action of the FAD-binding monooxygenases ausB and ausC, and the dioxygenase ausE. Acid-catalyzed keto-rearrangement and ring contraction of the tetraketide portion of preaustinoid A3 by ausJ lead to the formation of preaustinoid A4. The aldo-keto reductase ausK, with the help of ausH, is involved in the next step by transforming preaustinoid A4 into isoaustinone which is in turn hydroxylated by the P450 monooxygenase ausI to form austinolide. Finally, the cytochrome P450 monooxygenase ausG modifies austinolide to austinol. Austinol can be further modified to dehydroaustinol which forms a diffusible complex with diorcinol that initiates conidiation. Due to genetic rearrangements of the clusters and the subsequent loss of some enzymes, the end products of the Emericella nidulans austinoid biosynthesis clusters are austinol and dehydroaustinol, even if additional enzymes, such as the O-acetyltransferase ausQ and the cytochrome P450 monooxygenase ausR are still functional. The chain is Non-reducing polyketide synthase ausA from Emericella nidulans (strain FGSC A4 / ATCC 38163 / CBS 112.46 / NRRL 194 / M139) (Aspergillus nidulans).